Reading from the N-terminus, the 160-residue chain is Large ribosomal subunit protein eL21B (160 aa).

Lys32 participates in a covalent cross-link: Glycyl lysine isopeptide (Lys-Gly) (interchain with G-Cter in ubiquitin).

This sequence belongs to the eukaryotic ribosomal protein eL21 family. As to quaternary structure, component of the large ribosomal subunit (LSU). Mature yeast ribosomes consist of a small (40S) and a large (60S) subunit. The 40S small subunit contains 1 molecule of ribosomal RNA (18S rRNA) and 33 different proteins (encoded by 57 genes). The large 60S subunit contains 3 rRNA molecules (25S, 5.8S and 5S rRNA) and 46 different proteins (encoded by 81 genes).

It is found in the cytoplasm. Component of the ribosome, a large ribonucleoprotein complex responsible for the synthesis of proteins in the cell. The small ribosomal subunit (SSU) binds messenger RNAs (mRNAs) and translates the encoded message by selecting cognate aminoacyl-transfer RNA (tRNA) molecules. The large subunit (LSU) contains the ribosomal catalytic site termed the peptidyl transferase center (PTC), which catalyzes the formation of peptide bonds, thereby polymerizing the amino acids delivered by tRNAs into a polypeptide chain. The nascent polypeptides leave the ribosome through a tunnel in the LSU and interact with protein factors that function in enzymatic processing, targeting, and the membrane insertion of nascent chains at the exit of the ribosomal tunnel. This is Large ribosomal subunit protein eL21B from Saccharomyces cerevisiae (strain ATCC 204508 / S288c) (Baker's yeast).